The sequence spans 217 residues: Imidazole glycerol phosphate synthase subunit HisH (217 aa).

One can recognise a Glutamine amidotransferase type-1 domain in the interval 3 to 217 (TIAIVDYGMG…IYRNFVHWKP (215 aa)). Residue cysteine 82 is the Nucleophile of the active site. Residues histidine 197 and glutamate 199 contribute to the active site.

In terms of assembly, heterodimer of HisH and HisF.

It is found in the cytoplasm. It catalyses the reaction 5-[(5-phospho-1-deoxy-D-ribulos-1-ylimino)methylamino]-1-(5-phospho-beta-D-ribosyl)imidazole-4-carboxamide + L-glutamine = D-erythro-1-(imidazol-4-yl)glycerol 3-phosphate + 5-amino-1-(5-phospho-beta-D-ribosyl)imidazole-4-carboxamide + L-glutamate + H(+). It carries out the reaction L-glutamine + H2O = L-glutamate + NH4(+). It functions in the pathway amino-acid biosynthesis; L-histidine biosynthesis; L-histidine from 5-phospho-alpha-D-ribose 1-diphosphate: step 5/9. IGPS catalyzes the conversion of PRFAR and glutamine to IGP, AICAR and glutamate. The HisH subunit catalyzes the hydrolysis of glutamine to glutamate and ammonia as part of the synthesis of IGP and AICAR. The resulting ammonia molecule is channeled to the active site of HisF. The polypeptide is Imidazole glycerol phosphate synthase subunit HisH (Ralstonia nicotianae (strain ATCC BAA-1114 / GMI1000) (Ralstonia solanacearum)).